The primary structure comprises 362 residues: MQTPTLGQLATENGAQVVGDPDLAIIGLAPLDQAGSGELSFLSNPLYLAQALSSAAGAVIVSAADLERIRAEGQADGRNWLVARNPYVCFARIAQRFDKANQDARTGIDPRASVAADVTVPASCFIGPNVVIESGARIGERVRIVANSFVGAHAEIGDDSLLYANVSVYHHCVVGARAILHSGVVIGADGFGFAPDIGPTGVEYVKIPQTGRAVLGNDVEVGANTAIDRGAMADTVIEDGCKIDNQVQIAHNVRVGAHTVIAGCAAVSGSTHIGRFCVIGGAANFSGHLKIADRTTVSGGTSITKSITKPGGHFTSVFPFLPHGEWERNAAIVRGLTKLRERVMQLERRLRGQSAGTQTSQD.

Residue His-251 is the Proton acceptor of the active site.

The protein belongs to the transferase hexapeptide repeat family. LpxD subfamily. In terms of assembly, homotrimer.

It carries out the reaction a UDP-3-O-[(3R)-3-hydroxyacyl]-alpha-D-glucosamine + a (3R)-hydroxyacyl-[ACP] = a UDP-2-N,3-O-bis[(3R)-3-hydroxyacyl]-alpha-D-glucosamine + holo-[ACP] + H(+). It participates in bacterial outer membrane biogenesis; LPS lipid A biosynthesis. Its function is as follows. Catalyzes the N-acylation of UDP-3-O-acylglucosamine using 3-hydroxyacyl-ACP as the acyl donor. Is involved in the biosynthesis of lipid A, a phosphorylated glycolipid that anchors the lipopolysaccharide to the outer membrane of the cell. In Cupriavidus pinatubonensis (strain JMP 134 / LMG 1197) (Cupriavidus necator (strain JMP 134)), this protein is UDP-3-O-acylglucosamine N-acyltransferase.